Here is a 449-residue protein sequence, read N- to C-terminus: Probable phosphoglucosamine mutase (449 aa).

The active-site Phosphoserine intermediate is the serine 96. The Mg(2+) site is built by serine 96, aspartate 233, aspartate 235, and aspartate 237. Position 96 is a phosphoserine (serine 96).

The protein belongs to the phosphohexose mutase family. Requires Mg(2+) as cofactor. Activated by phosphorylation.

It catalyses the reaction alpha-D-glucosamine 1-phosphate = D-glucosamine 6-phosphate. In terms of biological role, catalyzes the conversion of glucosamine-6-phosphate to glucosamine-1-phosphate. Does not display phosphoglucomutase (PGM) or phosphomannomutase (PMM) activities. The chain is Probable phosphoglucosamine mutase (glmM) from Thermococcus kodakarensis (strain ATCC BAA-918 / JCM 12380 / KOD1) (Pyrococcus kodakaraensis (strain KOD1)).